The sequence spans 253 residues: Alpha-acetolactate decarboxylase (253 aa).

Belongs to the alpha-acetolactate decarboxylase family.

It catalyses the reaction (2S)-2-acetolactate + H(+) = (R)-acetoin + CO2. It participates in polyol metabolism; (R,R)-butane-2,3-diol biosynthesis; (R,R)-butane-2,3-diol from pyruvate: step 2/3. Functionally, converts acetolactate into acetoin. The polypeptide is Alpha-acetolactate decarboxylase (alsD) (Bacillus licheniformis (strain ATCC 14580 / DSM 13 / JCM 2505 / CCUG 7422 / NBRC 12200 / NCIMB 9375 / NCTC 10341 / NRRL NRS-1264 / Gibson 46)).